A 658-amino-acid polypeptide reads, in one-letter code: Threonine--tRNA ligase (658 aa).

Residues 1–64 (MSNTVSLQFP…GASGKVEIIT (64 aa)) form the TGS domain. Residues 246–548 (DHRRLGREMD…LIENFAGHMP (303 aa)) are catalytic. Zn(2+) is bound by residues cysteine 343, histidine 394, and histidine 525.

Belongs to the class-II aminoacyl-tRNA synthetase family. As to quaternary structure, homodimer. Requires Zn(2+) as cofactor.

Its subcellular location is the cytoplasm. The catalysed reaction is tRNA(Thr) + L-threonine + ATP = L-threonyl-tRNA(Thr) + AMP + diphosphate + H(+). Catalyzes the attachment of threonine to tRNA(Thr) in a two-step reaction: L-threonine is first activated by ATP to form Thr-AMP and then transferred to the acceptor end of tRNA(Thr). Also edits incorrectly charged L-seryl-tRNA(Thr). The polypeptide is Threonine--tRNA ligase (Brucella melitensis biotype 2 (strain ATCC 23457)).